A 1730-amino-acid polypeptide reads, in one-letter code: SH3 and multiple ankyrin repeat domains protein 3 (1730 aa).

The segment at 1–75 (MDGPGASAVV…KFLDEERLLQ (75 aa)) is intramolecular interaction with the ANK repeats. Position 122 is a phosphotyrosine (Tyr122). 6 ANK repeats span residues 148–178 (SGECPLSLAAQLDNATDLLKVLRNGGAHLDF), 182–211 (DGLTAVHCATRQRNAGALTTLLDLGASPDY), 215–245 (RGLTPLYHSALGGGDALCCELLLHDHAQLGT), 249–278 (NGWQEIHQACRFGHVQHLEHLLFYGANMGA), 282–311 (SGNTALHICALYNQESCARVLLFRGANKDV), and 315–345 (NSQTAFQVAIIAGNFELAEVIKTHKDSDVVP). Positions 354–466 (KRRRLAGPSG…PPPRGPKRKL (113 aa)) are disordered. Residues Ser373, Ser375, Ser387, and Ser394 each carry the phosphoserine modification. Residues 404–415 (LQEEKDRDRDGE) show a composition bias toward basic and acidic residues. Residues 444–460 (APGPGPASPAPPAPPPR) are compositionally biased toward pro residues. The region spanning 470–529 (VPGRKFIAVKAHSPQGEGEIPLHRGEAVKVLSIGEGGFWEGTVKGRTGWFPADCVEEVQM) is the SH3 domain. Ser482 carries the phosphoserine modification. The residue at position 555 (Tyr555) is a Phosphotyrosine. The 95-residue stretch at 570–664 (VAILQKRDHE…RLVMKVVSVT (95 aa)) folds into the PDZ domain. The interval 664-688 (TRKPEEDGARRRAPPPPKRAPSTTL) is disordered. The interval 677–684 (PPPPKRAP) is required for interaction with ABI1. 4 positions are modified to phosphoserine: Ser694, Ser781, Ser790, and Ser801. Disordered stretches follow at residues 760–1460 (QGLP…AAGP) and 1475–1524 (GDPV…SLLD). A compositionally biased stretch (pro residues) spans 812 to 844 (IPPPPQTAPPPPPAPYYFDSGPPPTFSPPPPPG). A compositionally biased stretch (low complexity) spans 857–869 (GLEARLGAGAAGL). Residues Ser890 and Ser897 each carry the phosphoserine modification. The residue at position 912 (Thr912) is a Phosphothreonine. Tyr930 carries the phosphotyrosine modification. An Asymmetric dimethylarginine modification is found at Arg965. Ser995 is modified (phosphoserine). Positions 1016–1026 (VKERRLEERRR) are enriched in basic and acidic residues. The segment covering 1078 to 1092 (LKPLVGGPSLGPSGS) has biased composition (low complexity). A compositionally biased stretch (polar residues) spans 1122–1131 (SQTPSRSPTP). Phosphothreonine is present on Thr1130. Residues Ser1134, Ser1159, Ser1163, and Ser1166 each carry the phosphoserine modification. The span at 1174–1194 (ARREAEKPPREERKSPEDKKS) shows a compositional bias: basic and acidic residues. The residue at position 1234 (Thr1234) is a Phosphothreonine. The span at 1235–1250 (PELAPAPMQAAAVAEP) shows a compositional bias: low complexity. Composition is skewed to pro residues over residues 1251-1261 (MPSPRAQPPGS) and 1321-1333 (TPPPGPGPLPTTV). Ser1253 is subject to Phosphoserine. Over residues 1360-1370 (ADTRSSSDPHL) the composition is skewed to basic and acidic residues. Residues 1371–1392 (ETTSTISTVSSMSTLSSESGEL) show a composition bias toward low complexity. Positions 1410–1416 (PPVPPKP) match the SH3-binding motif. Ser1420 carries the post-translational modification Phosphoserine. A coiled-coil region spans residues 1494 to 1514 (ISELSSRLQQLNKDTRSLGEE). Over residues 1495–1505 (SELSSRLQQLN) the composition is skewed to polar residues. Residues Ser1510, Ser1521, Ser1529, and Ser1539 each carry the phosphoserine modification. Disordered regions lie at residues 1546 to 1584 (ISAQRSPGGPGGGASYSVRPSGRYPVARRAPSPVKPASL) and 1627 to 1663 (VRSVSARSRSPSPSPLPSPSPGSGPSAGPRRPFQQKP). Low complexity predominate over residues 1627-1637 (VRSVSARSRSP). Ser1634, Ser1636, and Ser1638 each carry phosphoserine. Residues 1638 to 1648 (SPSPLPSPSPG) show a composition bias toward pro residues. Low complexity predominate over residues 1649–1658 (SGPSAGPRRP). The SAM domain occupies 1667–1730 (WSKFDVGDWL…ERALRQLDGS (64 aa)).

Belongs to the SHANK family. May homomultimerize via its SAM domain. Interacts with BAIAP2, DBNL and SLC17A7/VGLUT1. Interacts with DLGAP1/GKAP, GRM1/MGLUR1, GRM5/MGLUR5 and LZTS3 C-termini via its PDZ domain. Interacts with ABI1, HOMER1, HOMER2, HOMER3 and CTTN/cortactin SH3 domain. Is part of a complex with DLG4/PSD-95 and DLGAP1/GKAP. Interacts (via PDZ domain) with the GRIA1 subunit of the AMPA receptor (via PDZ-binding motif). Interacts with WASF1 and CYFIP2; the interactions mediate the association of SHANK3 with the WAVE1 complex. Interacts with ARPC2; the interaction probably mediates the association of SHANK3 with the Arp2/3 complex. Interacts (via ANK repeats) with SHARPIN and SPTAN1. Interacts (via PDZ domain) with ARHGAP44 (probably via PDZ-binding motif); the interaction takes place in dendritic spines and promotes GRIA1 exocytosis. Interacts with CAMK2A. Interacts with DIP2A. Interacts with ADGRL3. In terms of tissue distribution, in brain, highly expressed in striatum, thalamus, hippocampus and granule cells of the cerebellum.

It is found in the cytoplasm. Its subcellular location is the synapse. The protein localises to the postsynaptic density. The protein resides in the cell projection. It localises to the dendritic spine. In terms of biological role, major scaffold postsynaptic density protein which interacts with multiple proteins and complexes to orchestrate the dendritic spine and synapse formation, maturation and maintenance. Interconnects receptors of the postsynaptic membrane including NMDA-type and metabotropic glutamate receptors via complexes with GKAP/PSD-95 and HOMER, respectively, and the actin-based cytoskeleton. Plays a role in the structural and functional organization of the dendritic spine and synaptic junction through the interaction with Arp2/3 and WAVE1 complex as well as the promotion of the F-actin clusters. By way of this control of actin dynamics, participates in the regulation of developing neurons growth cone motility and the NMDA receptor-signaling. Also modulates GRIA1 exocytosis and GRM5/MGLUR5 expression and signaling to control the AMPA and metabotropic glutamate receptor-mediated synaptic transmission and plasticity. May be required at an early stage of synapse formation and be inhibited by IGF1 to promote synapse maturation. This is SH3 and multiple ankyrin repeat domains protein 3 (Shank3) from Mus musculus (Mouse).